The chain runs to 139 residues: Putative pre-16S rRNA nuclease (139 aa).

The protein belongs to the YqgF nuclease family.

The protein localises to the cytoplasm. Its function is as follows. Could be a nuclease involved in processing of the 5'-end of pre-16S rRNA. This Streptococcus pyogenes serotype M49 (strain NZ131) protein is Putative pre-16S rRNA nuclease.